A 314-amino-acid chain; its full sequence is tRNA pseudouridine synthase B (314 aa).

The active-site Nucleophile is the Asp-41.

This sequence belongs to the pseudouridine synthase TruB family. Type 1 subfamily.

The enzyme catalyses uridine(55) in tRNA = pseudouridine(55) in tRNA. In terms of biological role, responsible for synthesis of pseudouridine from uracil-55 in the psi GC loop of transfer RNAs. This chain is tRNA pseudouridine synthase B, found in Prochlorococcus marinus (strain NATL1A).